The following is a 97-amino-acid chain: Glutamyl-tRNA(Gln) amidotransferase subunit C (97 aa).

Belongs to the GatC family. As to quaternary structure, heterotrimer of A, B and C subunits.

The catalysed reaction is L-glutamyl-tRNA(Gln) + L-glutamine + ATP + H2O = L-glutaminyl-tRNA(Gln) + L-glutamate + ADP + phosphate + H(+). The enzyme catalyses L-aspartyl-tRNA(Asn) + L-glutamine + ATP + H2O = L-asparaginyl-tRNA(Asn) + L-glutamate + ADP + phosphate + 2 H(+). In terms of biological role, allows the formation of correctly charged Asn-tRNA(Asn) or Gln-tRNA(Gln) through the transamidation of misacylated Asp-tRNA(Asn) or Glu-tRNA(Gln) in organisms which lack either or both of asparaginyl-tRNA or glutaminyl-tRNA synthetases. The reaction takes place in the presence of glutamine and ATP through an activated phospho-Asp-tRNA(Asn) or phospho-Glu-tRNA(Gln). This Sulfurisphaera tokodaii (strain DSM 16993 / JCM 10545 / NBRC 100140 / 7) (Sulfolobus tokodaii) protein is Glutamyl-tRNA(Gln) amidotransferase subunit C.